The chain runs to 458 residues: Histone acetyltransferase KAT8 (458 aa).

Residues 1-14 are compositionally biased toward low complexity; sequence MAAQGATAAVAATT. Residues 1-52 are disordered; sequence MAAQGATAAVAATTSGIVGEGEPGPGENTSVEGPARSPGRVSPPTPARGEPE. Ala2 is modified (N-acetylalanine). Ser37 and Ser42 each carry phosphoserine. A Tudor-knot domain is found at 55–110; it reads VEIGETYLCRRPDSTWHSAEVIQSRVNDQEGREEFYVHYVGFNRRLDEWVDKNRLA. Lys113 carries the post-translational modification N6-acetyllysine. A Nuclear localization signal motif is present at residues 140-149; the sequence is RNQKRKHDEI. Positions 174–447 constitute an MYST-type HAT domain; that stretch reads TKVKYVDKIH…VDSVCLKWAP (274 aa). The segment at 174-458 is sufficient for interaction with KANSL1; sequence TKVKYVDKIH…KHKQVKLSKK (285 aa). Residues 207 to 232 form a C2HC MYST-type zinc finger; the sequence is LWLCEYCLKYMKFEKSYRFHLGQCQW. 4 residues coordinate Zn(2+): Cys210, Cys213, His226, and Cys230. Lys274 carries the N6-acetyllysine; by autocatalysis modification. Acetyl-CoA contacts are provided by Ile317, Thr319, Arg325, Arg326, Gly327, Gly329, and Lys330. Residue Ser348 is modified to Phosphoserine. The active-site Proton donor/acceptor is the Glu350. Residues Ser354, Ser363, Tyr408, and Lys432 each contribute to the acetyl-CoA site.

The protein belongs to the MYST (SAS/MOZ) family. Component of a multisubunit histone acetyltransferase complex (MSL) at least composed of the MOF/KAT8, MSL1/hampin, MSL2L1 and MSL3L1. Component of the NSL complex at least composed of MOF/KAT8, KANSL1, KANSL2, KANSL3, MCRS1, PHF20, OGT1/OGT, WDR5 and HCFC1. Component of some MLL1/MLL complex, at least composed of the core components KMT2A/MLL1, ASH2L, HCFC1, WDR5 and RBBP5, as well as the facultative components BACC1, CHD8, E2F6, HSP70, INO80C, KANSL1, LAS1L, MAX, MCRS1, MGA, MOF/KAT8, PELP1, PHF20, PRP31, RING2, RUVB1/TIP49A, RUVB2/TIP49B, SENP3, TAF1, TAF4, TAF6, TAF7, TAF9 and TEX10. Interacts with the chromodomain of MORF4L1/MRG15. Interacts with ATM (via its Tudor-knot domain); possibly regulating the activity of ATM. Interacts with NELFD. Acetylation at Lys-274 facilitates cognate substrate Lys-binding and acetylation. Although considered as an autoacetylation event, acetylation at Lys-274 probably takes place via a non-enzymatic process following acetyl-CoA-binding, which primes KAT8 for cognate protein-lysine acetylation. Deacetylated by SIRT1.

It localises to the nucleus. Its subcellular location is the chromosome. It is found in the mitochondrion. It catalyses the reaction L-lysyl-[histone] + acetyl-CoA = N(6)-acetyl-L-lysyl-[histone] + CoA + H(+). The catalysed reaction is L-lysyl-[protein] + acetyl-CoA = N(6)-acetyl-L-lysyl-[protein] + CoA + H(+). It carries out the reaction propanoyl-CoA + L-lysyl-[protein] = N(6)-propanoyl-L-lysyl-[protein] + CoA + H(+). With respect to regulation, the acetyltransferase activity is inhibited by anacardic acid derivatives. Functionally, histone acetyltransferase that catalyzes histone H4 acetylation at 'Lys-5'- and 'Lys-8' (H4K5ac and H4K8ac) or 'Lys-16' (H4K16ac), depending on the context. Catalytic component of the MSL histone acetyltransferase complex, a multiprotein complex that mediates the majority of histone H4 acetylation at 'Lys-16' (H4K16ac), an epigenetic mark that prevents chromatin compaction. H4K16ac constitutes the only acetylation mark intergenerationally transmitted and regulates key biological processes, such as oogenesis, embryonic stem cell pluripotency, hematopoiesis or glucose metabolism. The MSL complex is required for chromosome stability and genome integrity by maintaining homeostatic levels of H4K16ac. The MSL complex is also involved in gene dosage by promoting up-regulation of genes expressed by the X chromosome. X up-regulation is required to compensate for autosomal biallelic expression. The MSL complex also participates in gene dosage compensation by promoting expression of Tsix non-coding RNA. As part of the NSL histone acetyltransferase complex, catalyzes histone H4 acetylation at 'Lys-5'- and 'Lys-8' (H4K5ac and H4K8ac) at transcription start sites and promotes transcription initiation. The NSL complex also acts as a regulator of gene expression in mitochondria: KAT8 associates with mitochondrial DNA and controls expression of respiratory genes in an acetyltransferase-dependent mechanism. Also functions as an acetyltransferase for non-histone targets, such as ALKBH5, COX17, IRF3, KDM1A/LSD1, LMNA, PAX7 or TP53/p53. Acts as an inhibitor of antiviral immunity by acetylating IRF3, preventing IRF3 recruitment to promoters. Acts as a regulator of asymmetric division in muscle stem cells by mediating acetylation of PAX7. As part of the NSL complex, acetylates TP53/p53 at 'Lys-120'. Acts as a regulator of epithelial-to-mesenchymal transition as part of the NSL complex by mediating acetylation of KDM1A/LSD1. The NSL complex is required for nuclear architecture maintenance by mediating acetylation of LMNA. Promotes mitochondrial integrity by catalyzing acetylation of COX17. In addition to protein acetyltransferase activity, able to mediate protein propionylation. The chain is Histone acetyltransferase KAT8 (Kat8) from Rattus norvegicus (Rat).